A 373-amino-acid polypeptide reads, in one-letter code: MAVPVVEPERYEAQLDAKRERVTAQFARFSPPALEVFPSPPSHYRQRCEFRLWHEGDDLFYAMFEVDPSDPKRKEVIRLDDYPVASERINALMPALREALLASDVLRRKLFQVEFLTTLSGEALVTLIYHRQLDAAWEQEARALQTTLGVSIIGRARKQRLVLDRDHVWERLQVEGREFVYQQVENSFTQPNAAICQSMLGWARDVTRESREGDLVEFYCGNGNFTVALAENFRRVVATEISRTSVASANVNLEANAVANAVVARMSAEEFSAALAGEKTGRRVAALALDEHTFTTALVDPPRAGLDAHSCEQLKVYERIVYISCNPDTLEANLEQLSATHVVTRFALFDQFPYTDHCECGVLLERRAPAARA.

Residues glutamine 190, tyrosine 219, asparagine 224, glutamate 240, and aspartate 300 each coordinate S-adenosyl-L-methionine. Cysteine 325 serves as the catalytic Nucleophile. Glutamate 359 acts as the Proton acceptor in catalysis.

Belongs to the class I-like SAM-binding methyltransferase superfamily. RNA M5U methyltransferase family. TrmA subfamily.

The enzyme catalyses uridine(54) in tRNA + S-adenosyl-L-methionine = 5-methyluridine(54) in tRNA + S-adenosyl-L-homocysteine + H(+). The catalysed reaction is uridine(341) in tmRNA + S-adenosyl-L-methionine = 5-methyluridine(341) in tmRNA + S-adenosyl-L-homocysteine + H(+). Dual-specificity methyltransferase that catalyzes the formation of 5-methyluridine at position 54 (m5U54) in all tRNAs, and that of position 341 (m5U341) in tmRNA (transfer-mRNA). This chain is tRNA/tmRNA (uracil-C(5))-methyltransferase, found in Chromohalobacter salexigens (strain ATCC BAA-138 / DSM 3043 / CIP 106854 / NCIMB 13768 / 1H11).